The chain runs to 444 residues: MPTTLMLLPCMLLLLLTAAAVAVGGTRLPLEVFEITPTTSTADKHKSLQYTVVYDAKDISGAAAATGVASSTVKPATEQLTVVSISSTAAAEKDLAESRRHARQMLQKQQQHRSIIGGKHGDRDVRILYQVGDSEEDLPVCAPNAVCSKIDLYETPWIERQCRCPESNRMPNNVIIHHHSHSSGSVDSLKYRNYYEREKMMQHKRMLLGEFQDKKFESLHMKKLMQKLGAVYEDDLDHLDQSPDYNDALPYAEVQDNEFPRGSAHMRHSGHRGSKEPATTFIGGCPSSLGVEDGHTIADKTRHYKMCQPVHKLPVCTHFRDYTWTLTTAAELNVTEQIVHCRCPRNSVTYLTKREPIGNGSPGYRYLFACSPLTRLRCQRKQPCKLFTVRKRQEFLDEVNINSLCQCPKGHRCPSHHTQSGVIAGESFLEDNIQTYSGYCMAND.

The N-terminal stretch at 1–24 (MPTTLMLLPCMLLLLLTAAAVAVG) is a signal peptide. Two-fingered domain 1 part repeat units follow at residues 123 to 165 (RDVR…CRCP) and 285 to 307 (CPSS…YKMC). 8 cysteine pairs are disulfide-bonded: Cys141/Cys162, Cys147/Cys285, Cys164/Cys307, Cys316/Cys341, Cys343/Cys370, Cys378/Cys405, Cys384/Cys413, and Cys407/Cys440. Two-fingered domain repeat units follow at residues 316 to 370 (CTHF…LFAC) and 378 to 444 (CQRK…MAND). N-linked (GlcNAc...) asparagine glycosylation occurs at Asn333.

As to quaternary structure, interacts with spi. In terms of tissue distribution, during embryogenesis, expression is in a segmental pattern in the ectoderm and in the nervous system. In the eye imaginal disks, expression in photoreceptor cells begins a few rows posterior to the morphogenetic furrow. Also expressed in the wing disk. In the adult, expression is seen in the retina and lamina.

It is found in the secreted. Its function is as follows. Regulates cell determination; development of ommatidia and optic lobe. Is a signaling molecule involved in the process of axon pathfinding in the eye. Part of the Ras pathway regulating programmed cell death in pupal eyes; activated by lozenge (lz). Antagonist for the Egfr receptor (gurken). Inhibits Egfr signaling without interacting directly with the receptor, but instead by sequestering the Egfr-activating ligand spitz (spi). This is Protein giant-lens (aos) from Drosophila melanogaster (Fruit fly).